The chain runs to 403 residues: Histidine--tRNA ligase (403 aa).

The protein belongs to the class-II aminoacyl-tRNA synthetase family. In terms of assembly, homodimer.

Its subcellular location is the cytoplasm. The enzyme catalyses tRNA(His) + L-histidine + ATP = L-histidyl-tRNA(His) + AMP + diphosphate + H(+). The polypeptide is Histidine--tRNA ligase (Sulfurimonas denitrificans (strain ATCC 33889 / DSM 1251) (Thiomicrospira denitrificans (strain ATCC 33889 / DSM 1251))).